The primary structure comprises 148 residues: Large ribosomal subunit protein uL22 (148 aa).

It belongs to the universal ribosomal protein uL22 family. Part of the 50S ribosomal subunit.

Functionally, this protein binds specifically to 23S rRNA. It makes multiple contacts with different domains of the 23S rRNA in the assembled 50S subunit and ribosome. In terms of biological role, the globular domain of the protein is located near the polypeptide exit tunnel on the outside of the subunit, while an extended beta-hairpin is found that lines the wall of the exit tunnel in the center of the 70S ribosome. The polypeptide is Large ribosomal subunit protein uL22 (Thermoplasma volcanium (strain ATCC 51530 / DSM 4299 / JCM 9571 / NBRC 15438 / GSS1)).